A 288-amino-acid chain; its full sequence is tRNA dimethylallyltransferase (288 aa).

2-9 serves as a coordination point for ATP; it reads GPTAAGKS. Position 4–9 (4–9) interacts with substrate; sequence TAAGKS. An interaction with substrate tRNA region spans residues 27 to 30; that stretch reads DSMQ.

Belongs to the IPP transferase family. As to quaternary structure, monomer. The cofactor is Mg(2+).

It carries out the reaction adenosine(37) in tRNA + dimethylallyl diphosphate = N(6)-dimethylallyladenosine(37) in tRNA + diphosphate. In terms of biological role, catalyzes the transfer of a dimethylallyl group onto the adenine at position 37 in tRNAs that read codons beginning with uridine, leading to the formation of N6-(dimethylallyl)adenosine (i(6)A). The protein is tRNA dimethylallyltransferase of Frankia alni (strain DSM 45986 / CECT 9034 / ACN14a).